The sequence spans 66 residues: uncharacterized protein (66 aa).

The segment covering 1–20 (MTIINSISNFGSNNSFSNNN) has biased composition (low complexity). A disordered region spans residues 1-47 (MTIINSISNFGSNNSFSNNNTVNQKSVIKRSKQMKNDNTSIGSSFKN). Over residues 36 to 47 (NDNTSIGSSFKN) the composition is skewed to polar residues.

This is an uncharacterized protein from Dictyostelium discoideum (Social amoeba).